A 962-amino-acid chain; its full sequence is Phenylalanine--tRNA ligase beta subunit (962 aa).

Residues 85–201 form the tRNA-binding domain; it reads TIRWCKVRVC…AEVFQGDELS (117 aa). The region spanning 456–538 is the B5 domain; it reads TQQSPILLST…RVIGFNRIPS (83 aa). Positions 516, 522, 525, and 526 each coordinate Mg(2+). Residues 621 to 675 form an insert region; sequence PDSTHNPDSGSDPIIPTGVTRITEPGSSGVSGPGNVGVKEKCSADTSIEHAPTTR. One can recognise an FDX-ACB domain in the interval 870–961; it reads PTSPAATQHL…ASSKFGAIMR (92 aa).

Belongs to the phenylalanyl-tRNA synthetase beta subunit family. Type 1 subfamily. As to quaternary structure, tetramer of two alpha and two beta subunits. It depends on Mg(2+) as a cofactor.

It localises to the cytoplasm. The catalysed reaction is tRNA(Phe) + L-phenylalanine + ATP = L-phenylalanyl-tRNA(Phe) + AMP + diphosphate + H(+). This chain is Phenylalanine--tRNA ligase beta subunit, found in Tropheryma whipplei (strain Twist) (Whipple's bacillus).